Here is a 111-residue protein sequence, read N- to C-terminus: Iron-sulfur cluster assembly protein CyaY (111 aa).

The protein belongs to the frataxin family.

In terms of biological role, involved in iron-sulfur (Fe-S) cluster assembly. May act as a regulator of Fe-S biogenesis. This is Iron-sulfur cluster assembly protein CyaY from Cupriavidus metallidurans (strain ATCC 43123 / DSM 2839 / NBRC 102507 / CH34) (Ralstonia metallidurans).